Reading from the N-terminus, the 1238-residue chain is Anion exchange protein 2 (1238 aa).

The interval 1–238 is disordered; the sequence is MSGTPRRPAS…YNLQERRRIG (238 aa). At 1–704 the chain is on the cytoplasmic side; the sequence is MSGTPRRPAS…SDFRDALDPQ (704 aa). Basic and acidic residues-rich tracts occupy residues 37–49 and 58–75; these read DLHR…RFEE and GGEE…EYHR. 2 stretches are compositionally biased toward basic residues: residues 76 to 85 and 94 to 110; these read QSSHHIHHPL and RRRK…RRRP. Residues 120–133 are compositionally biased toward acidic residues; the sequence is TIEEGEEDEDETSE. 4 positions are modified to phosphoserine: S132, S144, S170, and S172. The span at 141-154 shows a compositional bias: polar residues; it reads TDPSPASTPTSVQF. Residues 205–215 are compositionally biased toward gly residues; the sequence is GTAGGDDGGAS. Position 239 is a phosphoserine (S239). Position 253 is a phosphothreonine (T253). K270 carries the post-translational modification N6-methyllysine. A disordered region spans residues 277–315; it reads VPGVRRHLVRKNAKGSSQSSREGREPGPTPRTRPRAPHK. Positions 280–289 are enriched in basic residues; it reads VRRHLVRKNA. S439 is subject to Phosphoserine. Residues 445 to 466 form a disordered region; the sequence is SLLGHHHTQGAESDPHVTEPLI. Transmembrane regions (helical) follow at residues 705–728, 734–771, 791–813, and 823–844; these read CLAA…GLLG, LIGV…LLVF, VWIG…SFLV, and IFAF…VKIF. Positions 705–1238 are membrane (anion exchange); sequence CLAAVIFIYF…DEYNEMPMPV (534 aa). The Extracellular portion of the chain corresponds to 845–897; it reads QEHPLHGCLASNSSEADGGKNTTWTEAAPTPGHGNTSSAEQAGVERPQGQPNT. 3 N-linked (GlcNAc...) asparagine glycosylation sites follow: N856, N865, and N879. Residues 858–869 show a composition bias toward polar residues; it reads SEADGGKNTTWT. The disordered stretch occupies residues 858–892; sequence SEADGGKNTTWTEAAPTPGHGNTSSAEQAGVERPQ. Residues 898–915 form a helical membrane-spanning segment; the sequence is ALLSLVLMAGTFFIAFFL. The Cytoplasmic segment spans residues 916-930; that stretch reads RKFKNSRFFPGRIRR. A run of 5 helical transmembrane segments spans residues 931–951, 985–1007, 1033–1054, 1088–1133, and 1160–1196; these read VIGD…DYSI, PFPV…LIFM, LLLI…LAAA, VTGL…IQFY, and MHLF…TVPL. C1170 carries the S-palmitoyl cysteine lipid modification.

The protein belongs to the anion exchanger (TC 2.A.31) family. In terms of tissue distribution, expressed in the cochlea (at protein level).

Its subcellular location is the apical cell membrane. It localises to the basolateral cell membrane. It catalyses the reaction hydrogencarbonate(in) + chloride(out) = hydrogencarbonate(out) + chloride(in). Its function is as follows. Sodium-independent anion exchanger which mediates the electroneutral exchange of chloride for bicarbonate ions across the cell membrane. Plays an important role in osteoclast differentiation and function. Regulates bone resorption and calpain-dependent actin cytoskeleton organization in osteoclasts via anion exchange-dependent control of pH. Essential for intracellular pH regulation in CD8(+) T-cells upon CD3 stimulation, modulating CD8(+) T-cell response. This chain is Anion exchange protein 2 (SLC4A2), found in Cavia porcellus (Guinea pig).